The following is a 265-amino-acid chain: MLAYPRIDPVAVSIGPLQFRWYGLMYLFGFISGWWLGRRRAAQPGSGWHPQQVDDMVTWAIFGVVLGGRLGYILFYDLAYYASQPAAIFQIWHGGMSFHGGLLGVLFAVWLYARRAEREFLSVVDFVAPLIPPGLFFGRIGNFINGELWGAPTTLPWAMVFPDGGPFPRHPSQLYEAVLEGVVLFAAVWWFSGRKRPVGAVSGLFGVLYAIFRFAVEFVREPDPQLGYLAFGWLTMGQVLCLPLFGVGMWLLLRNRGAAEGPAAR.

Helical transmembrane passes span 11-31 (AVSI…FGFI), 56-76 (MVTW…ILFY), 91-111 (IWHG…AVWL), 120-140 (FLSV…FGRI), 173-193 (QLYE…WFSG), 198-218 (VGAV…AVEF), and 233-253 (WLTM…WLLL). Position 139 (Arg139) interacts with a 1,2-diacyl-sn-glycero-3-phospho-(1'-sn-glycerol).

It belongs to the Lgt family.

The protein resides in the cell inner membrane. The enzyme catalyses L-cysteinyl-[prolipoprotein] + a 1,2-diacyl-sn-glycero-3-phospho-(1'-sn-glycerol) = an S-1,2-diacyl-sn-glyceryl-L-cysteinyl-[prolipoprotein] + sn-glycerol 1-phosphate + H(+). Its pathway is protein modification; lipoprotein biosynthesis (diacylglyceryl transfer). Functionally, catalyzes the transfer of the diacylglyceryl group from phosphatidylglycerol to the sulfhydryl group of the N-terminal cysteine of a prolipoprotein, the first step in the formation of mature lipoproteins. This Nitratidesulfovibrio vulgaris (strain DSM 19637 / Miyazaki F) (Desulfovibrio vulgaris) protein is Phosphatidylglycerol--prolipoprotein diacylglyceryl transferase.